The sequence spans 504 residues: Probable cytosol aminopeptidase (504 aa).

Lysine 268 and aspartate 273 together coordinate Mn(2+). The active site involves lysine 280. 3 residues coordinate Mn(2+): aspartate 291, aspartate 350, and glutamate 352. Residue arginine 354 is part of the active site.

This sequence belongs to the peptidase M17 family. The cofactor is Mn(2+).

Its subcellular location is the cytoplasm. The catalysed reaction is Release of an N-terminal amino acid, Xaa-|-Yaa-, in which Xaa is preferably Leu, but may be other amino acids including Pro although not Arg or Lys, and Yaa may be Pro. Amino acid amides and methyl esters are also readily hydrolyzed, but rates on arylamides are exceedingly low.. It carries out the reaction Release of an N-terminal amino acid, preferentially leucine, but not glutamic or aspartic acids.. Functionally, presumably involved in the processing and regular turnover of intracellular proteins. Catalyzes the removal of unsubstituted N-terminal amino acids from various peptides. This chain is Probable cytosol aminopeptidase, found in Psychromonas ingrahamii (strain DSM 17664 / CCUG 51855 / 37).